A 202-amino-acid polypeptide reads, in one-letter code: Peptide deformylase 2 (202 aa).

Fe cation is bound by residues Cys123 and His165. Glu166 is a catalytic residue. His169 contacts Fe cation.

This sequence belongs to the polypeptide deformylase family. Requires Fe(2+) as cofactor.

The enzyme catalyses N-terminal N-formyl-L-methionyl-[peptide] + H2O = N-terminal L-methionyl-[peptide] + formate. Its function is as follows. Removes the formyl group from the N-terminal Met of newly synthesized proteins. Requires at least a dipeptide for an efficient rate of reaction. N-terminal L-methionine is a prerequisite for activity but the enzyme has broad specificity at other positions. The sequence is that of Peptide deformylase 2 from Vibrio vulnificus (strain YJ016).